Here is a 317-residue protein sequence, read N- to C-terminus: Sulfate adenylyltransferase subunit 2 (317 aa).

2 disordered regions span residues 1-21 and 298-317; these read MPDS…APLD and RAID…EGYF.

The protein belongs to the PAPS reductase family. CysD subfamily. Heterodimer composed of CysD, the smaller subunit, and CysN.

The catalysed reaction is sulfate + ATP + H(+) = adenosine 5'-phosphosulfate + diphosphate. It functions in the pathway sulfur metabolism; hydrogen sulfide biosynthesis; sulfite from sulfate: step 1/3. In terms of biological role, with CysN forms the ATP sulfurylase (ATPS) that catalyzes the adenylation of sulfate producing adenosine 5'-phosphosulfate (APS) and diphosphate, the first enzymatic step in sulfur assimilation pathway. APS synthesis involves the formation of a high-energy phosphoric-sulfuric acid anhydride bond driven by GTP hydrolysis by CysN coupled to ATP hydrolysis by CysD. In Rhizobium etli (strain ATCC 51251 / DSM 11541 / JCM 21823 / NBRC 15573 / CFN 42), this protein is Sulfate adenylyltransferase subunit 2.